The following is a 28-amino-acid chain: Ribosome-inactivating protein pleuturegin (28 aa).

The protein belongs to the ribosome-inactivating protein family.

The enzyme catalyses Endohydrolysis of the N-glycosidic bond at one specific adenosine on the 28S rRNA.. Functionally, inhibits protein synthesis in animal cells. Does not possess ribonuclease activity. The chain is Ribosome-inactivating protein pleuturegin from Pleurotus tuber-regium (King tuber oyster mushroom).